We begin with the raw amino-acid sequence, 404 residues long: Serine/threonine transporter SstT (404 aa).

8 helical membrane-spanning segments follow: residues 10–30, 53–73, 81–101, 140–160, 177–197, 215–235, 287–307, and 329–349; these read ILGG…ICLA, AIAP…KEVG, ILVM…ILSY, AITN…GIAL, AVSF…FGLV, LLAV…PLLV, IAIP…ITVL, and IVAS…LLLI.

The protein belongs to the dicarboxylate/amino acid:cation symporter (DAACS) (TC 2.A.23) family.

It localises to the cell inner membrane. The enzyme catalyses L-serine(in) + Na(+)(in) = L-serine(out) + Na(+)(out). It catalyses the reaction L-threonine(in) + Na(+)(in) = L-threonine(out) + Na(+)(out). In terms of biological role, involved in the import of serine and threonine into the cell, with the concomitant import of sodium (symport system). The protein is Serine/threonine transporter SstT of Glaesserella parasuis serovar 5 (strain SH0165) (Haemophilus parasuis).